Here is a 312-residue protein sequence, read N- to C-terminus: Olfactory receptor 7D2 (312 aa).

Residues 1–25 lie on the Extracellular side of the membrane; sequence MEAGNQTGFLEFILLGLSEDPELQP. An N-linked (GlcNAc...) asparagine glycan is attached at Asn5. Residues 26–46 form a helical membrane-spanning segment; it reads FIFGLFLSMYLVTVLGNLLII. At 47–54 the chain is on the cytoplasmic side; the sequence is LAISSDSH. Residues 55–75 form a helical membrane-spanning segment; sequence LHTPMYFFLSNLSWVDICFST. The Extracellular portion of the chain corresponds to 76-99; the sequence is CIVPKMLVNIQTENKAISYMDCLT. An intrachain disulfide couples Cys97 to Cys189. A helical transmembrane segment spans residues 100–120; it reads QVYFSMFFPILDTLLLTVMAY. At 121 to 139 the chain is on the cytoplasmic side; it reads DRFVAVCHPLHYMIIMNPH. A helical transmembrane segment spans residues 140 to 160; that stretch reads LCGLLVFVTWLIGVMTSLLHI. Residues 161–197 lie on the Extracellular side of the membrane; it reads SLMMHLIFCKDFEIPHFFCELTYILQLACSDTFLNST. Residues 198–217 traverse the membrane as a helical segment; sequence LIYFMTGVLGVFPLLGIIFS. Topologically, residues 218–237 are cytoplasmic; it reads YSRIASSIRKMSSSGGKQKA. A helical membrane pass occupies residues 238–258; it reads LSTCGSHLSVVSLFYGTGIGV. At 259–271 the chain is on the extracellular side; sequence HFTSAVTHSSQKI. A helical transmembrane segment spans residues 272–292; sequence SVASVMYTVVTPMLNPFIYSL. At 293–312 the chain is on the cytoplasmic side; it reads RNKDVKGALGSLLSRAASCL.

The protein belongs to the G-protein coupled receptor 1 family.

It localises to the cell membrane. Its function is as follows. Odorant receptor. This Homo sapiens (Human) protein is Olfactory receptor 7D2 (OR7D2).